We begin with the raw amino-acid sequence, 952 residues long: Leucine--tRNA ligase (952 aa).

The 'HIGH' region signature appears at 66–77; that stretch reads PYPSGAGLHVGH. A 'KMSKS' region motif is present at residues 722–726; the sequence is KMGKS. Position 725 (lysine 725) interacts with ATP.

It belongs to the class-I aminoacyl-tRNA synthetase family.

It is found in the cytoplasm. The enzyme catalyses tRNA(Leu) + L-leucine + ATP = L-leucyl-tRNA(Leu) + AMP + diphosphate. This chain is Leucine--tRNA ligase, found in Corynebacterium glutamicum (strain ATCC 13032 / DSM 20300 / JCM 1318 / BCRC 11384 / CCUG 27702 / LMG 3730 / NBRC 12168 / NCIMB 10025 / NRRL B-2784 / 534).